The sequence spans 126 residues: Fluoride-specific ion channel FluC (126 aa).

4 helical membrane-spanning segments follow: residues 3 to 23 (MILAVAAGGGLGAVARYLTGV), 39 to 59 (TVNVTGSFAMGVLAGLGAHVW), 71 to 91 (VGVLGGFTTFSSFSLDVALLV), and 101 to 121 (AYVAASFLLSVGGLFAGLALI). Positions 75 and 78 each coordinate Na(+).

This sequence belongs to the fluoride channel Fluc/FEX (TC 1.A.43) family.

The protein localises to the cell inner membrane. It carries out the reaction fluoride(in) = fluoride(out). Na(+) is not transported, but it plays an essential structural role and its presence is essential for fluoride channel function. Its function is as follows. Fluoride-specific ion channel. Important for reducing fluoride concentration in the cell, thus reducing its toxicity. The protein is Fluoride-specific ion channel FluC of Rhodospirillum centenum (strain ATCC 51521 / SW).